We begin with the raw amino-acid sequence, 125 residues long: Ribonuclease VapC19 (125 aa).

Residues 3–122 form the PINc domain; sequence LIDTTIAVDH…RHFPMFPDLQ (120 aa). Mg(2+) contacts are provided by Asp5 and Asp93.

The protein belongs to the PINc/VapC protein family. Mg(2+) serves as cofactor.

In terms of biological role, toxic component of a type II toxin-antitoxin (TA) system. An RNase. Its toxic effect is neutralized by coexpression with cognate antitoxin VapB19. The polypeptide is Ribonuclease VapC19 (Mycobacterium tuberculosis (strain CDC 1551 / Oshkosh)).